We begin with the raw amino-acid sequence, 387 residues long: 1-hydroxy-2-naphthoate 1,2-dioxygenasee (387 aa).

2 Cupin type-2 domains span residues F103 to D171 and V271 to F337.

In terms of assembly, homohexamer. The cofactor is Fe(2+).

It catalyses the reaction 1-hydroxy-2-naphthoate + O2 = (3Z)-4-(2-carboxyphenyl)-2-oxobut-3-enoate + H(+). Its function is as follows. Dioxygenase involved in phenanthrene catabolism by mediating cleavage of 1-hydroxy-2-naphthoate. In Nocardioides sp. (strain KP7), this protein is 1-hydroxy-2-naphthoate 1,2-dioxygenasee (phdI).